A 184-amino-acid chain; its full sequence is ATP synthase subunit b, chloroplastic (184 aa).

The chain crosses the membrane as a helical span at residues L27–L49.

The protein belongs to the ATPase B chain family. In terms of assembly, F-type ATPases have 2 components, F(1) - the catalytic core - and F(0) - the membrane proton channel. F(1) has five subunits: alpha(3), beta(3), gamma(1), delta(1), epsilon(1). F(0) has four main subunits: a(1), b(1), b'(1) and c(10-14). The alpha and beta chains form an alternating ring which encloses part of the gamma chain. F(1) is attached to F(0) by a central stalk formed by the gamma and epsilon chains, while a peripheral stalk is formed by the delta, b and b' chains.

It localises to the plastid. Its subcellular location is the chloroplast thylakoid membrane. Its function is as follows. F(1)F(0) ATP synthase produces ATP from ADP in the presence of a proton or sodium gradient. F-type ATPases consist of two structural domains, F(1) containing the extramembraneous catalytic core and F(0) containing the membrane proton channel, linked together by a central stalk and a peripheral stalk. During catalysis, ATP synthesis in the catalytic domain of F(1) is coupled via a rotary mechanism of the central stalk subunits to proton translocation. Component of the F(0) channel, it forms part of the peripheral stalk, linking F(1) to F(0). The polypeptide is ATP synthase subunit b, chloroplastic (Arabis hirsuta (Hairy rock-cress)).